The primary structure comprises 150 residues: MDSRKLSPRGKKLESHLSQEHRRPPLGLIAAWGQPSIQSSVQQGLQTQDWVCEPPERRRPGRRWSVSIDERRRLATLGGRERPGAAGTQLHCRDVVQMVAQLVSEDVDKDVLLPHPLRSTESTNAFQAFLARSAPFWHNATFEASRSPPS.

Residues 1–23 are compositionally biased toward basic and acidic residues; the sequence is MDSRKLSPRGKKLESHLSQEHRR. The disordered stretch occupies residues 1–26; that stretch reads MDSRKLSPRGKKLESHLSQEHRRPPL.

It is found in the cytoplasm. The protein resides in the cytoplasmic vesicle. The protein localises to the secretory vesicle. Its subcellular location is the acrosome. The sequence is that of Testis-expressed protein 22 (TEX22) from Homo sapiens (Human).